A 240-amino-acid polypeptide reads, in one-letter code: Cysteine-rich venom protein triflin (240 aa).

Residues 1–19 (MIAFIVLPILAAVLQQSSG) form the signal peptide. The SCP domain maps to 39 to 166 (DLHNSLRRSV…KYSYFYVCQY (128 aa)). 8 disulfides stabilise this stretch: C75–C153, C92–C167, C148–C164, C186–C193, C189–C198, C202–C235, C211–C229, and C220–C233. In terms of domain architecture, ShKT spans 202–235 (CTRENEFTNCDSLVQKSSCQDNYMKSKCPASCFC).

Belongs to the CRISP family. As to quaternary structure, forms a stable, non-covalent complex with SSP-2. As to expression, expressed by the venom gland.

The protein localises to the secreted. Blocks contraction of smooth muscle elicited by high potassium-induced depolarization. May target voltage-gated calcium channels (Cav) on smooth muscle. The polypeptide is Cysteine-rich venom protein triflin (Protobothrops flavoviridis (Habu)).